The chain runs to 380 residues: Heme A synthase (380 aa).

8 consecutive transmembrane segments (helical) span residues 36–56, 125–145, 151–171, 187–207, 227–247, 287–307, 320–340, and 344–364; these read IRAW…VGGL, VIGL…KIPA, LILP…MVAS, LATH…SILQ, FGLA…GALV, LVQF…VMVW, FAFN…IVTV, and APWQ…VLIL. Heme is bound at residue His-292. His-352 contributes to the heme binding site.

The protein belongs to the COX15/CtaA family. Type 2 subfamily. In terms of assembly, interacts with CtaB. It depends on heme b as a cofactor.

It localises to the cell membrane. It carries out the reaction Fe(II)-heme o + 2 A + H2O = Fe(II)-heme a + 2 AH2. It participates in porphyrin-containing compound metabolism; heme A biosynthesis; heme A from heme O: step 1/1. Catalyzes the conversion of heme O to heme A by two successive hydroxylations of the methyl group at C8. The first hydroxylation forms heme I, the second hydroxylation results in an unstable dihydroxymethyl group, which spontaneously dehydrates, resulting in the formyl group of heme A. This chain is Heme A synthase, found in Ruegeria pomeroyi (strain ATCC 700808 / DSM 15171 / DSS-3) (Silicibacter pomeroyi).